A 226-amino-acid polypeptide reads, in one-letter code: ATP-dependent dethiobiotin synthetase BioD (226 aa).

Position 14–19 (14–19) interacts with ATP; that stretch reads GIGKTF. Residue T18 participates in Mg(2+) binding. The active site involves K39. S43 serves as a coordination point for substrate. Residues D56, 117–120, 177–178, 206–208, and N213 each bind ATP; these read EGVG, NT, and PHI. Residues D56 and E117 each coordinate Mg(2+).

Belongs to the dethiobiotin synthetase family. In terms of assembly, homodimer. It depends on Mg(2+) as a cofactor.

It localises to the cytoplasm. The enzyme catalyses (7R,8S)-7,8-diammoniononanoate + CO2 + ATP = (4R,5S)-dethiobiotin + ADP + phosphate + 3 H(+). The protein operates within cofactor biosynthesis; biotin biosynthesis; biotin from 7,8-diaminononanoate: step 1/2. Its function is as follows. Catalyzes a mechanistically unusual reaction, the ATP-dependent insertion of CO2 between the N7 and N8 nitrogen atoms of 7,8-diaminopelargonic acid (DAPA, also called 7,8-diammoniononanoate) to form a ureido ring. The chain is ATP-dependent dethiobiotin synthetase BioD from Xylella fastidiosa (strain 9a5c).